The primary structure comprises 458 residues: Chromosomal replication initiator protein DnaA (458 aa).

The segment at 1–79 (MSLAIWQECL…ENPNHSVKIR (79 aa)) is domain I, interacts with DnaA modulators. A domain II region spans residues 79 to 120 (RLMVGNVSSVEKKPAKQIPTQAPLTNQPWEGESKAHRVPHKS). Residues 92–114 (PAKQIPTQAPLTNQPWEGESKAH) are disordered. Residues 96 to 106 (IPTQAPLTNQP) show a composition bias toward polar residues. The segment at 121–338 (NLIKKYTFDN…GAIANISAKA (218 aa)) is domain III, AAA+ region. ATP-binding residues include Gly-165, Gly-167, Lys-168, and Thr-169. Residues 339-458 (QFTGQGITIS…YKILIRTLSM (120 aa)) form a domain IV, binds dsDNA region.

Belongs to the DnaA family. As to quaternary structure, oligomerizes as a right-handed, spiral filament on DNA at oriC.

The protein localises to the cytoplasm. In terms of biological role, plays an essential role in the initiation and regulation of chromosomal replication. ATP-DnaA binds to the origin of replication (oriC) to initiate formation of the DNA replication initiation complex once per cell cycle. Binds the DnaA box (a 9 base pair repeat at the origin) and separates the double-stranded (ds)DNA. Forms a right-handed helical filament on oriC DNA; dsDNA binds to the exterior of the filament while single-stranded (ss)DNA is stabiized in the filament's interior. The ATP-DnaA-oriC complex binds and stabilizes one strand of the AT-rich DNA unwinding element (DUE), permitting loading of DNA polymerase. After initiation quickly degrades to an ADP-DnaA complex that is not apt for DNA replication. Binds acidic phospholipids. This Psychromonas ingrahamii (strain DSM 17664 / CCUG 51855 / 37) protein is Chromosomal replication initiator protein DnaA.